We begin with the raw amino-acid sequence, 396 residues long: Elongation factor Tu (396 aa).

The tr-type G domain occupies 10–206 (KPHVNIGTIG…AVDESVPDPV (197 aa)). The segment at 19 to 26 (GHVDHGKT) is G1. Residue 19 to 26 (GHVDHGKT) participates in GTP binding. Thr26 lines the Mg(2+) pocket. The tract at residues 62 to 66 (GITIN) is G2. A G3 region spans residues 83–86 (DAPG). Residues 83–87 (DAPGH) and 138–141 (NKSD) each bind GTP. The segment at 138-141 (NKSD) is G4. Positions 176–178 (SGL) are G5.

It belongs to the TRAFAC class translation factor GTPase superfamily. Classic translation factor GTPase family. EF-Tu/EF-1A subfamily. Monomer.

It is found in the cytoplasm. The catalysed reaction is GTP + H2O = GDP + phosphate + H(+). Its function is as follows. GTP hydrolase that promotes the GTP-dependent binding of aminoacyl-tRNA to the A-site of ribosomes during protein biosynthesis. The sequence is that of Elongation factor Tu from Paenarthrobacter aurescens (strain TC1).